Reading from the N-terminus, the 129-residue chain is Transcription antitermination protein NusB (129 aa).

Belongs to the NusB family.

Involved in transcription antitermination. Required for transcription of ribosomal RNA (rRNA) genes. Binds specifically to the boxA antiterminator sequence of the ribosomal RNA (rrn) operons. This Staphylococcus aureus (strain bovine RF122 / ET3-1) protein is Transcription antitermination protein NusB.